The chain runs to 261 residues: Thiazole synthase (261 aa).

K98 acts as the Schiff-base intermediate with DXP in catalysis. 1-deoxy-D-xylulose 5-phosphate contacts are provided by residues G159, 185–186, and 207–208; these read AG and AS.

This sequence belongs to the ThiG family. In terms of assembly, homotetramer. Forms heterodimers with either ThiH or ThiS.

It is found in the cytoplasm. The enzyme catalyses [ThiS sulfur-carrier protein]-C-terminal-Gly-aminoethanethioate + 2-iminoacetate + 1-deoxy-D-xylulose 5-phosphate = [ThiS sulfur-carrier protein]-C-terminal Gly-Gly + 2-[(2R,5Z)-2-carboxy-4-methylthiazol-5(2H)-ylidene]ethyl phosphate + 2 H2O + H(+). The protein operates within cofactor biosynthesis; thiamine diphosphate biosynthesis. In terms of biological role, catalyzes the rearrangement of 1-deoxy-D-xylulose 5-phosphate (DXP) to produce the thiazole phosphate moiety of thiamine. Sulfur is provided by the thiocarboxylate moiety of the carrier protein ThiS. In vitro, sulfur can be provided by H(2)S. The protein is Thiazole synthase of Mycobacterium leprae (strain Br4923).